The chain runs to 602 residues: Elongation factor 4 (602 aa).

In terms of domain architecture, tr-type G spans 6-188 (DHIRNFSIVA…AIVNKLPAPK (183 aa)). GTP-binding positions include 18–23 (DHGKST) and 135–138 (NKID).

It belongs to the TRAFAC class translation factor GTPase superfamily. Classic translation factor GTPase family. LepA subfamily.

Its subcellular location is the cell inner membrane. The enzyme catalyses GTP + H2O = GDP + phosphate + H(+). Its function is as follows. Required for accurate and efficient protein synthesis under certain stress conditions. May act as a fidelity factor of the translation reaction, by catalyzing a one-codon backward translocation of tRNAs on improperly translocated ribosomes. Back-translocation proceeds from a post-translocation (POST) complex to a pre-translocation (PRE) complex, thus giving elongation factor G a second chance to translocate the tRNAs correctly. Binds to ribosomes in a GTP-dependent manner. The polypeptide is Elongation factor 4 (Brucella abortus (strain 2308)).